The sequence spans 413 residues: Putative F-box/kelch-repeat protein At3g22870 (413 aa).

The 52-residue stretch at 2 to 53 (TLTISDLPRDLKKKIFSRIPLRYVRALRLTCKEWETLIKSRSLKIDEEESQM) folds into the F-box domain. 2 Kelch repeats span residues 156-202 (LLRF…IGVS) and 331-379 (KVFI…RRRQ).

The protein is Putative F-box/kelch-repeat protein At3g22870 of Arabidopsis thaliana (Mouse-ear cress).